A 310-amino-acid chain; its full sequence is uncharacterized protein (310 aa).

Disordered regions lie at residues 1 to 53 (MSNK…NKEM), 78 to 127 (PIEN…TITN), and 153 to 217 (QQPL…SQML). The segment covering 11–25 (GEEDEEEDDLYDDYD) has biased composition (acidic residues). Polar residues-rich tracts occupy residues 37 to 49 (STSM…NISL) and 78 to 88 (PIENINENPSP). Low complexity-rich tracts occupy residues 94–126 (QTQQ…TTIT), 164–184 (PSPI…QYIT), and 192–208 (YQPI…QIPT). A coiled-coil region spans residues 268 to 299 (DLIKSVQHNIRQYNDDILTLEEKLEQTEWSLQ).

This is an uncharacterized protein from Dictyostelium discoideum (Social amoeba).